The sequence spans 709 residues: Phosphoribosylformylglycinamidine synthase subunit PurL (709 aa).

H36 is a catalytic residue. ATP is bound by residues Y39 and K80. A Mg(2+)-binding site is contributed by E82. Substrate contacts are provided by residues 83–86 (SHNH) and R105. The active-site Proton acceptor is the H84. Mg(2+) is bound at residue D106. Residue Q226 coordinates substrate. D252 contributes to the Mg(2+) binding site. 294-296 (ETQ) contributes to the substrate binding site. The ATP site is built by D470 and G507. Residue S510 coordinates substrate.

Belongs to the FGAMS family. Monomer. Part of the FGAM synthase complex composed of 1 PurL, 1 PurQ and 2 PurS subunits.

The protein localises to the cytoplasm. The enzyme catalyses N(2)-formyl-N(1)-(5-phospho-beta-D-ribosyl)glycinamide + L-glutamine + ATP + H2O = 2-formamido-N(1)-(5-O-phospho-beta-D-ribosyl)acetamidine + L-glutamate + ADP + phosphate + H(+). It participates in purine metabolism; IMP biosynthesis via de novo pathway; 5-amino-1-(5-phospho-D-ribosyl)imidazole from N(2)-formyl-N(1)-(5-phospho-D-ribosyl)glycinamide: step 1/2. In terms of biological role, part of the phosphoribosylformylglycinamidine synthase complex involved in the purines biosynthetic pathway. Catalyzes the ATP-dependent conversion of formylglycinamide ribonucleotide (FGAR) and glutamine to yield formylglycinamidine ribonucleotide (FGAM) and glutamate. The FGAM synthase complex is composed of three subunits. PurQ produces an ammonia molecule by converting glutamine to glutamate. PurL transfers the ammonia molecule to FGAR to form FGAM in an ATP-dependent manner. PurS interacts with PurQ and PurL and is thought to assist in the transfer of the ammonia molecule from PurQ to PurL. In Saccharolobus islandicus (strain M.16.27) (Sulfolobus islandicus), this protein is Phosphoribosylformylglycinamidine synthase subunit PurL.